The primary structure comprises 1849 residues: Brefeldin A-inhibited guanine nucleotide-exchange protein 1 (1849 aa).

The interval 2–224 (YEGKKTKNMF…QEAKQMEKER (223 aa)) is DCB; DCB:DCB and DCB:HUS domain interaction. Residues 46–58 (AETEKQSPPHGEA) are compositionally biased toward basic and acidic residues. Disordered regions lie at residues 46 to 65 (AETEKQSPPHGEAKAGSSTL), 216 to 301 (EAKQ…ADQA), and 350 to 413 (INVS…SPGA). Phosphoserine is present on residues Ser52, Ser286, Ser289, and Ser290. Polar residues-rich tracts occupy residues 350–360 (INVSADGNNGT) and 394–409 (SVSSNDTQESGNSSGP). Phosphoserine is present on residues Ser397 and Ser410. The segment at 557 to 577 (ADAQSVVDIYVNYDCDLNAAN) is HUS; DCB:HUS domain interaction. The interval 634–687 (PNSQTTLGQEKPSEQETSEMKHPETINRYGSLNSLESTSSSGIGSYSTQMSGTD) is disordered. Over residues 644–658 (KPSEQETSEMKHPET) the composition is skewed to basic and acidic residues. Low complexity predominate over residues 664-684 (SLNSLESTSSSGIGSYSTQMS). Residues 709–840 (FTKKPKRGIQ…IIMLTTDLHS (132 aa)) form the SEC7 domain. The Nuclear localization signal (NLS) signature appears at 711–715 (KKPKR). Ser1079, Ser1566, and Ser1569 each carry phosphoserine.

Homodimer. Interacts with ARFGEF2/BIG2; both proteins are probably part of the same or very similar macromolecular complexes. Interacts with FKBP2. Interacts with MYO9B. Interacts with PRKAR1A and PRKAR2A. Interacts with PPP1CC. Interacts with NCL, FBL, NUP62 and U3 small nucleolar RNA. Interacts with DPY30. Interacts with PDE3A. Interacts with KANK1. Interacts with TBC1D22A and TBC1D22B. Post-translationally, phosphorylated. In vitro phosphorylated by PKA reducing its GEF activity and dephosphorylated by phosphatase PP1. As to expression, abundantly expressed in kidney, somewhat less abundant in lung, spleen, and brain, and still less abundant in heart.

It is found in the cytoplasm. The protein resides in the perinuclear region. It localises to the golgi apparatus. The protein localises to the trans-Golgi network. Its subcellular location is the nucleus. It is found in the nucleolus. The protein resides in the nucleus matrix. It localises to the membrane. Its activity is regulated as follows. Inhibited by brefeldin A. Functionally, promotes guanine-nucleotide exchange on ARF1 and ARF3. Promotes the activation of ARF1/ARF3 through replacement of GDP with GTP. Involved in vesicular trafficking. Required for the maintenance of Golgi structure; the function may be independent of its GEF activity. Required for the maturation of integrin beta-1 in the Golgi. Involved in the establishment and persistence of cell polarity during directed cell movement in wound healing. Proposed to act as A kinase-anchoring protein (AKAP) and may mediate crosstalk between Arf and PKA pathways. Inhibits GAP activity of MYO9B probably through competitive RhoA binding. The function in the nucleus remains to be determined. This is Brefeldin A-inhibited guanine nucleotide-exchange protein 1 (ARFGEF1) from Bos taurus (Bovine).